The sequence spans 537 residues: ATP synthase subunit alpha (537 aa).

174-181 lines the ATP pocket; that stretch reads GDRQTGKT.

This sequence belongs to the ATPase alpha/beta chains family. As to quaternary structure, F-type ATPases have 2 components, CF(1) - the catalytic core - and CF(0) - the membrane proton channel. CF(1) has five subunits: alpha(3), beta(3), gamma(1), delta(1), epsilon(1). CF(0) has three main subunits: a(1), b(2) and c(9-12). The alpha and beta chains form an alternating ring which encloses part of the gamma chain. CF(1) is attached to CF(0) by a central stalk formed by the gamma and epsilon chains, while a peripheral stalk is formed by the delta and b chains.

The protein resides in the cell inner membrane. It carries out the reaction ATP + H2O + 4 H(+)(in) = ADP + phosphate + 5 H(+)(out). Functionally, produces ATP from ADP in the presence of a proton gradient across the membrane. The alpha chain is a regulatory subunit. The chain is ATP synthase subunit alpha from Verminephrobacter eiseniae (strain EF01-2).